We begin with the raw amino-acid sequence, 738 residues long: 1,4-alpha-glucan branching enzyme GlgB (738 aa).

The Nucleophile role is filled by Asp-399. The Proton donor role is filled by Glu-452.

Belongs to the glycosyl hydrolase 13 family. GlgB subfamily. In terms of assembly, monomer.

The enzyme catalyses Transfers a segment of a (1-&gt;4)-alpha-D-glucan chain to a primary hydroxy group in a similar glucan chain.. Its pathway is glycan biosynthesis; glycogen biosynthesis. Its function is as follows. Catalyzes the formation of the alpha-1,6-glucosidic linkages in glycogen by scission of a 1,4-alpha-linked oligosaccharide from growing alpha-1,4-glucan chains and the subsequent attachment of the oligosaccharide to the alpha-1,6 position. The polypeptide is 1,4-alpha-glucan branching enzyme GlgB (Chlamydia trachomatis serovar D (strain ATCC VR-885 / DSM 19411 / UW-3/Cx)).